A 237-amino-acid chain; its full sequence is UPF0173 metal-dependent hydrolase HQ_3368A (237 aa).

This sequence belongs to the UPF0173 family.

This Haloquadratum walsbyi (strain DSM 16790 / HBSQ001) protein is UPF0173 metal-dependent hydrolase HQ_3368A.